The sequence spans 291 residues: 4-diphosphocytidyl-2-C-methyl-D-erythritol kinase (291 aa).

The active site involves K10. 100–110 (PIGGGLGGGSS) is an ATP binding site. Residue D142 is part of the active site.

Belongs to the GHMP kinase family. IspE subfamily. Homodimer.

The enzyme catalyses 4-CDP-2-C-methyl-D-erythritol + ATP = 4-CDP-2-C-methyl-D-erythritol 2-phosphate + ADP + H(+). Its pathway is isoprenoid biosynthesis; isopentenyl diphosphate biosynthesis via DXP pathway; isopentenyl diphosphate from 1-deoxy-D-xylulose 5-phosphate: step 3/6. Functionally, catalyzes the phosphorylation of the position 2 hydroxy group of 4-diphosphocytidyl-2C-methyl-D-erythritol. This is 4-diphosphocytidyl-2-C-methyl-D-erythritol kinase from Hamiltonella defensa subsp. Acyrthosiphon pisum (strain 5AT).